Here is a 119-residue protein sequence, read N- to C-terminus: C-X-C motif chemokine 17 (119 aa).

Residues 1-21 form the signal peptide; it reads MKVLISSLLLLLPLMLMSMVS. 2 cysteine pairs are disulfide-bonded: Cys75–Cys103 and Cys77–Cys110. The segment at 81-100 is disordered; the sequence is KGNVKKTRHQRHHRKPNKHS. Basic residues predominate over residues 82–100; sequence GNVKKTRHQRHHRKPNKHS.

The protein belongs to the intercrine alpha (chemokine CxC) family. Post-translationally, likely to undergo an endoproteolytic process to form a four-cysteine-containing mature peptide with a canonical CXC chemokine scaffold after secretion. In terms of tissue distribution, detected in trachea, stomach, lung and skeletal muscle. Detected in intestine and in normal and asthmatic lung (at protein level). Breast tumors showed 3- to 24-fold up-regulation.

It is found in the secreted. In terms of biological role, chemokine that acts as a chemoattractant for monocytes, macrophages and dendritic cells. Plays a role in angiogenesis and possibly in the development of tumors. Acts as an anti-inflammatory in the stomach. May play a role in the innate defense against infections. Activates the C-X-C chemokine receptor GPR35 to induce a rapid and transient rise in the level of intracellular calcium ions. Its function is as follows. Seems to exhibit much higher chemoattractant potency on monocytes and macrophages than 6-Cys CXCL17. This is C-X-C motif chemokine 17 (CXCL17) from Homo sapiens (Human).